Reading from the N-terminus, the 99-residue chain is U1-theraphotoxin-Lsp1c (99 aa).

An N-terminal signal peptide occupies residues 1–23; sequence MRKITIRALLLCSLLLVFHTSAA. Residues 24 to 50 constitute a propeptide that is removed on maturation; it reads AELQAQEGHLMIPGDTDTALETVDDER. Disulfide bonds link Cys54–Cys67, Cys58–Cys91, Cys72–Cys74, and Cys85–Cys96.

This sequence belongs to the neurotoxin 12 (Hwtx-2) family. 04 (lasiotoxin) subfamily. In terms of tissue distribution, expressed by the venom gland.

Its subcellular location is the secreted. Its function is as follows. Toxin that causes irreversible contractile paralysis into adult Aedes aegypti resulting in 100% mortality after 24 hours. This Lasiodora sp. (strain IBSP 8539) (Brazilian salmon pink birdeater) protein is U1-theraphotoxin-Lsp1c.